Here is a 165-residue protein sequence, read N- to C-terminus: uncharacterized protein (165 aa).

This is an uncharacterized protein from Rickettsia conorii (strain ATCC VR-613 / Malish 7).